The following is a 119-amino-acid chain: Ribonuclease (119 aa).

Substrate contacts are provided by Lys-6 and Arg-9. Residue His-11 is the Proton acceptor of the active site. Cystine bridges form between Cys-26-Cys-81, Cys-40-Cys-92, and Cys-58-Cys-107. Substrate-binding positions include 41 to 45 and Arg-82; that span reads KFTNT. Catalysis depends on His-114, which acts as the Proton donor.

Belongs to the pancreatic ribonuclease family. As to quaternary structure, monomer. Interacts with and forms tight 1:1 complexes with RNH1. Dimerization of two such complexes may occur. Interaction with RNH1 inhibits this protein. In terms of tissue distribution, pancreas.

The protein localises to the secreted. The catalysed reaction is an [RNA] containing cytidine + H2O = an [RNA]-3'-cytidine-3'-phosphate + a 5'-hydroxy-ribonucleotide-3'-[RNA].. It catalyses the reaction an [RNA] containing uridine + H2O = an [RNA]-3'-uridine-3'-phosphate + a 5'-hydroxy-ribonucleotide-3'-[RNA].. Functionally, endonuclease that catalyzes the cleavage of RNA on the 3' side of pyrimidine nucleotides. Acts on single-stranded and double-stranded RNA. The protein is Ribonuclease of Chelydra serpentina (Snapping turtle).